Here is a 455-residue protein sequence, read N- to C-terminus: Kynurenine 3-monooxygenase (455 aa).

This sequence belongs to the aromatic-ring hydroxylase family. KMO subfamily. Requires FAD as cofactor.

The catalysed reaction is L-kynurenine + NADPH + O2 + H(+) = 3-hydroxy-L-kynurenine + NADP(+) + H2O. Its pathway is cofactor biosynthesis; NAD(+) biosynthesis; quinolinate from L-kynurenine: step 1/3. Catalyzes the hydroxylation of L-kynurenine (L-Kyn) to form 3-hydroxy-L-kynurenine (L-3OHKyn). Required for synthesis of quinolinic acid. In Stenotrophomonas maltophilia (strain K279a), this protein is Kynurenine 3-monooxygenase.